The chain runs to 127 residues: Large ribosomal subunit protein uL18 (127 aa).

Belongs to the universal ribosomal protein uL18 family. In terms of assembly, part of the 50S ribosomal subunit; part of the 5S rRNA/L5/L18/L25 subcomplex. Contacts the 5S and 23S rRNAs.

This is one of the proteins that bind and probably mediate the attachment of the 5S RNA into the large ribosomal subunit, where it forms part of the central protuberance. In Streptomyces griseus subsp. griseus (strain JCM 4626 / CBS 651.72 / NBRC 13350 / KCC S-0626 / ISP 5235), this protein is Large ribosomal subunit protein uL18.